The primary structure comprises 179 residues: Crossover junction endodeoxyribonuclease RuvC (179 aa).

Active-site residues include Asp12, Glu72, and Asp144. Residues Asp12, Glu72, and Asp144 each coordinate Mg(2+).

It belongs to the RuvC family. In terms of assembly, homodimer which binds Holliday junction (HJ) DNA. The HJ becomes 2-fold symmetrical on binding to RuvC with unstacked arms; it has a different conformation from HJ DNA in complex with RuvA. In the full resolvosome a probable DNA-RuvA(4)-RuvB(12)-RuvC(2) complex forms which resolves the HJ. It depends on Mg(2+) as a cofactor.

The protein localises to the cytoplasm. The catalysed reaction is Endonucleolytic cleavage at a junction such as a reciprocal single-stranded crossover between two homologous DNA duplexes (Holliday junction).. The RuvA-RuvB-RuvC complex processes Holliday junction (HJ) DNA during genetic recombination and DNA repair. Endonuclease that resolves HJ intermediates. Cleaves cruciform DNA by making single-stranded nicks across the HJ at symmetrical positions within the homologous arms, yielding a 5'-phosphate and a 3'-hydroxyl group; requires a central core of homology in the junction. The consensus cleavage sequence is 5'-(A/T)TT(C/G)-3'. Cleavage occurs on the 3'-side of the TT dinucleotide at the point of strand exchange. HJ branch migration catalyzed by RuvA-RuvB allows RuvC to scan DNA until it finds its consensus sequence, where it cleaves and resolves the cruciform DNA. The chain is Crossover junction endodeoxyribonuclease RuvC from Dechloromonas aromatica (strain RCB).